The sequence spans 930 residues: Alanine--tRNA ligase (930 aa).

Histidine 595, histidine 599, cysteine 700, and histidine 704 together coordinate Zn(2+).

The protein belongs to the class-II aminoacyl-tRNA synthetase family. Zn(2+) is required as a cofactor.

It localises to the cytoplasm. It catalyses the reaction tRNA(Ala) + L-alanine + ATP = L-alanyl-tRNA(Ala) + AMP + diphosphate. Catalyzes the attachment of alanine to tRNA(Ala) in a two-step reaction: alanine is first activated by ATP to form Ala-AMP and then transferred to the acceptor end of tRNA(Ala). Also edits incorrectly charged Ser-tRNA(Ala) and Gly-tRNA(Ala) via its editing domain. The chain is Alanine--tRNA ligase from Malacoplasma penetrans (strain HF-2) (Mycoplasma penetrans).